Reading from the N-terminus, the 327-residue chain is Zinc transport protein ZntB (327 aa).

The Cytoplasmic portion of the chain corresponds to 1–271 (MESFAGKELQ…AMNRRTYTMS (271 aa)). The helical transmembrane segment at 272–292 (LLAMVFLPTTFLTGLFGVNLG) threads the bilayer. Residues 293–300 (GIPGGDAP) are Periplasmic-facing. Residues 301 to 321 (FGFFTFCLMLVILVGGVAWWL) traverse the membrane as a helical segment. Residues 322 to 327 (KRSKWL) lie on the Cytoplasmic side of the membrane.

It belongs to the CorA metal ion transporter (MIT) (TC 1.A.35) family.

The protein localises to the cell inner membrane. The enzyme catalyses Zn(2+)(out) + H(+)(out) = Zn(2+)(in) + H(+)(in). Its function is as follows. Zinc transporter. Acts as a Zn(2+):proton symporter, which likely mediates zinc ion uptake. The chain is Zinc transport protein ZntB from Pectobacterium carotovorum subsp. carotovorum (strain PC1).